A 205-amino-acid chain; its full sequence is MANTLYDRTIAFAGICQAVALVQQVAKDGHCDKDAFEASLSAILNTNPANTVGVFGREANLKLGLECLVKGIDSTPAGSDITRYIISLMALERKLSSRNDSMSQLGDRIQTAERQTEHFDLFDEQMISNLASIYLDVVSPIGPRIQVSGTPAVLQQTSSQHKVRALLLSGIRSAVLWRQVGGKRRHLIFGRKKMIEQAQILLARM.

Belongs to the HflD family.

It localises to the cytoplasm. Its subcellular location is the cell inner membrane. The chain is High frequency lysogenization protein HflD homolog from Vibrio atlanticus (strain LGP32) (Vibrio splendidus (strain Mel32)).